The sequence spans 149 residues: Large ribosomal subunit protein uL13 (149 aa).

Belongs to the universal ribosomal protein uL13 family. As to quaternary structure, part of the 50S ribosomal subunit.

Its function is as follows. This protein is one of the early assembly proteins of the 50S ribosomal subunit, although it is not seen to bind rRNA by itself. It is important during the early stages of 50S assembly. The polypeptide is Large ribosomal subunit protein uL13 (Bifidobacterium adolescentis (strain ATCC 15703 / DSM 20083 / NCTC 11814 / E194a)).